A 628-amino-acid polypeptide reads, in one-letter code: Netrin-4 (628 aa).

An N-terminal signal peptide occupies residues 1-18 (MGSCARLLLLWGCTVVAA). The region spanning 30-261 (CEKACNPRMG…AIYDFIVKGS (232 aa)) is the Laminin N-terminal domain. Asn-56 and Asn-163 each carry an N-linked (GlcNAc...) asparagine glycan. Cystine bridges form between Cys-262-Cys-271, Cys-264-Cys-293, Cys-295-Cys-304, Cys-307-Cys-329, Cys-332-Cys-341, Cys-334-Cys-359, Cys-362-Cys-371, Cys-374-Cys-392, Cys-395-Cys-413, Cys-397-Cys-420, Cys-422-Cys-431, and Cys-434-Cys-446. Laminin EGF-like domains lie at 262-331 (CFCN…ECRT), 332-394 (CKCN…ACKP), and 395-448 (CSCH…GCRP). A glycan (N-linked (GlcNAc...) asparagine) is linked at Asn-353. N-linked (GlcNAc...) asparagine glycosylation is present at Asn-483. Intrachain disulfides connect Cys-506–Cys-576 and Cys-520–Cys-627. In terms of domain architecture, NTR spans 506 to 627 (CECKEQTLGN…KVMDILKREC (122 aa)).

May form a homodimer.

It is found in the secreted. Its subcellular location is the extracellular space. The protein resides in the extracellular matrix. Functionally, may play an important role in neural, kidney and vascular development. This is Netrin-4 (NTN4) from Pongo abelii (Sumatran orangutan).